The following is a 357-amino-acid chain: Neutral protease 2 homolog BDCG_00922 (357 aa).

Residues 1-19 form the signal peptide; sequence MRSPQSILAIVAFATTAIA. Residues 20–182 constitute a propeptide that is removed on maturation; sequence GVVPSTEKRA…FASLNQFSKR (163 aa). 3 cysteine pairs are disulfide-bonded: Cys-188-Cys-259, Cys-266-Cys-284, and Cys-297-Cys-357. Zn(2+) is bound at residue His-308. Residue Glu-309 is part of the active site. Zn(2+) is bound by residues His-312 and Asp-323.

Belongs to the peptidase M35 family. Zn(2+) is required as a cofactor.

Its subcellular location is the secreted. It catalyses the reaction Preferential cleavage of bonds with hydrophobic residues in P1'. Also 3-Asn-|-Gln-4 and 8-Gly-|-Ser-9 bonds in insulin B chain.. In terms of biological role, secreted metalloproteinase that allows assimilation of proteinaceous substrates. Shows high activities on basic nuclear substrates such as histone and protamine. In Ajellomyces dermatitidis (strain ER-3 / ATCC MYA-2586) (Blastomyces dermatitidis), this protein is Neutral protease 2 homolog BDCG_00922.